The sequence spans 318 residues: Beta-ketoacyl-[acyl-carrier-protein] synthase III (318 aa).

Residues Cys-112 and His-245 contribute to the active site. Residues 246-250 (QANIR) are ACP-binding. Residue Asn-275 is part of the active site.

It belongs to the thiolase-like superfamily. FabH family. As to quaternary structure, homodimer.

It localises to the cytoplasm. It carries out the reaction malonyl-[ACP] + acetyl-CoA + H(+) = 3-oxobutanoyl-[ACP] + CO2 + CoA. Its pathway is lipid metabolism; fatty acid biosynthesis. In terms of biological role, catalyzes the condensation reaction of fatty acid synthesis by the addition to an acyl acceptor of two carbons from malonyl-ACP. Catalyzes the first condensation reaction which initiates fatty acid synthesis and may therefore play a role in governing the total rate of fatty acid production. Possesses both acetoacetyl-ACP synthase and acetyl transacylase activities. Its substrate specificity determines the biosynthesis of branched-chain and/or straight-chain of fatty acids. The protein is Beta-ketoacyl-[acyl-carrier-protein] synthase III of Nitrosomonas europaea (strain ATCC 19718 / CIP 103999 / KCTC 2705 / NBRC 14298).